The chain runs to 309 residues: MVFPAKRFCLVPSMEGVRWAFSCGTWLPSRAEWLLAVRSIQPEEKERIGQFVFARDAKAAMAGRLMIRKLVAEKLNIPWNHIRLQRTAKGKPVLAKDSSNPYPNFNFNISHQGDYAVLAAEPELQVGIDIMKTSFPGRGSIPEFFHIMKRKFTNKEWETIRSFKDEWTQLDMFYRNWALKESFIKAIGVGLGFELQRLEFDLSPLNLDIGQVYKETRLFLDGEEEKEWAFEESKIDEHHFVAVALRKPDGSRHQDVPSQDDSKPTQRQFTILNFNDLMSSAVPMTPEDPSFWDCFCFTEEIPIRNGTKS.

CoA contacts are provided by residues Arg-47, 86-91 (RTAKGK), and 108-111 (NISH). Residues Asp-129 and Glu-181 each coordinate Mg(2+). 181–185 (ESFIK) is a CoA binding site. A Phosphoserine modification is found at Ser-258.

It belongs to the P-Pant transferase superfamily. AcpS family. In terms of assembly, monomer. Mg(2+) is required as a cofactor. As to expression, detected in heart, skeletal muscle, placenta, testis, brain, pancreas, liver and kidney.

It localises to the cytoplasm. Its subcellular location is the cytosol. It catalyses the reaction apo-[ACP] + CoA = holo-[ACP] + adenosine 3',5'-bisphosphate + H(+). It carries out the reaction apo-[ACP] + acetyl-CoA = acetyl-[ACP] + adenosine 3',5'-bisphosphate + H(+). Its function is as follows. Catalyzes the post-translational modification of target proteins by phosphopantetheine. Can transfer the 4'-phosphopantetheine moiety from coenzyme A, regardless of whether the CoA is presented in the free thiol form or as an acetyl thioester, to a serine residue of a broad range of acceptors including the acyl carrier domain of FASN. In Homo sapiens (Human), this protein is L-aminoadipate-semialdehyde dehydrogenase-phosphopantetheinyl transferase (AASDHPPT).